The following is a 326-amino-acid chain: MTGIVYKSTGSWYTVKSLQGHFMECRIKGKFRMKGIKSTNPIAVGDVVDYDLDENSDVVTGTITKIHDRKNYIVRKSVNLSHQMHIIASNLDYVFLLITINNPPTTTNFIDRFLVTAQAYGIETILVFNKIDTYNEAMLDEQLFMQYIYQEIGYKCLRVSSTEGKGIEELKNIMKNKVTMFSGHSGVGKSTLVNAMEPTLHLKTKTISEQSKQGQHTTTFAEMYDLSFGAQIIDTPGIKGFGIVDMEKEEISGYFPEFFKLKDQCKFNNCLHKDEPKCAVKDALEKDKISYSRYNSYLKILEGDDETYRTDIYNDDRIASDETRNK.

Residues 80-241 (LSHQMHIIAS…IIDTPGIKGF (162 aa)) enclose the CP-type G domain. Residues 129-132 (NKID) and 183-191 (GHSGVGKST) each bind GTP. Positions 265, 270, 272, and 278 each coordinate Zn(2+).

It belongs to the TRAFAC class YlqF/YawG GTPase family. RsgA subfamily. As to quaternary structure, monomer. Associates with 30S ribosomal subunit, binds 16S rRNA. Requires Zn(2+) as cofactor.

It is found in the cytoplasm. One of several proteins that assist in the late maturation steps of the functional core of the 30S ribosomal subunit. Helps release RbfA from mature subunits. May play a role in the assembly of ribosomal proteins into the subunit. Circularly permuted GTPase that catalyzes slow GTP hydrolysis, GTPase activity is stimulated by the 30S ribosomal subunit. The chain is Small ribosomal subunit biogenesis GTPase RsgA from Flavobacterium psychrophilum (strain ATCC 49511 / DSM 21280 / CIP 103535 / JIP02/86).